A 381-amino-acid polypeptide reads, in one-letter code: DNA replication and repair protein RecF (381 aa).

30–37 (GENAQGKT) is a binding site for ATP.

This sequence belongs to the RecF family.

It localises to the cytoplasm. The RecF protein is involved in DNA metabolism; it is required for DNA replication and normal SOS inducibility. RecF binds preferentially to single-stranded, linear DNA. It also seems to bind ATP. In Lactobacillus delbrueckii subsp. bulgaricus (strain ATCC BAA-365 / Lb-18), this protein is DNA replication and repair protein RecF.